The primary structure comprises 914 residues: Translation initiation factor IF-2 (914 aa).

Disordered regions lie at residues 52-84 (GGGK…VKAP) and 98-326 (AGGN…GVRL). Residues 57–68 (AEGAAKAPAKAA) are compositionally biased toward low complexity. Residues 69–84 (AKGDAKTAAKGDVKAP) show a composition bias toward basic and acidic residues. A compositionally biased stretch (low complexity) spans 98–138 (AGGNGEAAAPPAQPGGTATTPAAQATPEAPARPGPAAARPS). Composition is skewed to pro residues over residues 139–169 (APAP…PAPK) and 193–207 (PRPV…PGAP). Residues 236–296 (RPGGGRPGGP…GAAGAFGRPG (61 aa)) are compositionally biased toward gly residues. Residues 300 to 309 (RRGRKSKRQK) show a composition bias toward basic residues. One can recognise a tr-type G domain in the interval 421–581 (TRPPVVTVMG…AVLLTADAAL (161 aa)). Residues 430–437 (GHVDHGKT), 469–473 (DTPGH), and 523–526 (NKID) each bind GTP.

This sequence belongs to the TRAFAC class translation factor GTPase superfamily. Classic translation factor GTPase family. IF-2 subfamily.

It is found in the cytoplasm. In terms of biological role, one of the essential components for the initiation of protein synthesis. Protects formylmethionyl-tRNA from spontaneous hydrolysis and promotes its binding to the 30S ribosomal subunits. Also involved in the hydrolysis of GTP during the formation of the 70S ribosomal complex. The chain is Translation initiation factor IF-2 from Mycobacterium avium (strain 104).